The sequence spans 143 residues: ATP synthase epsilon chain (143 aa).

This sequence belongs to the ATPase epsilon chain family. As to quaternary structure, F-type ATPases have 2 components, CF(1) - the catalytic core - and CF(0) - the membrane proton channel. CF(1) has five subunits: alpha(3), beta(3), gamma(1), delta(1), epsilon(1). CF(0) has three main subunits: a, b and c.

The protein localises to the cell membrane. Its function is as follows. Produces ATP from ADP in the presence of a proton gradient across the membrane. The chain is ATP synthase epsilon chain from Lacticaseibacillus casei (strain BL23) (Lactobacillus casei).